We begin with the raw amino-acid sequence, 86 residues long: Cell division topological specificity factor (86 aa).

The protein belongs to the MinE family.

Functionally, prevents the cell division inhibition by proteins MinC and MinD at internal division sites while permitting inhibition at polar sites. This ensures cell division at the proper site by restricting the formation of a division septum at the midpoint of the long axis of the cell. The chain is Cell division topological specificity factor from Albidiferax ferrireducens (strain ATCC BAA-621 / DSM 15236 / T118) (Rhodoferax ferrireducens).